The chain runs to 110 residues: Protein ripply3 (110 aa).

The short motif at 18 to 21 is the WRPW motif element; that stretch reads WRPW. Residues 50–85 are ripply homology domain; it reads HPVRLFLPRSRMQEYLSRLGSSVLASFPVQATLHFY. A compositionally biased stretch (acidic residues) spans 87-99; it reads DEDSSSEEEEDEE. The interval 87–110 is disordered; it reads DEDSSSEEEEDEEHANTRCRLWRP.

It belongs to the ripply family.

It localises to the nucleus. Probable transcriptional regulator involved in developmental processes. The chain is Protein ripply3 (ripply3) from Danio rerio (Zebrafish).